The primary structure comprises 626 residues: DEAD-box ATP-dependent RNA helicase 16 (626 aa).

The interval 1 to 48 is disordered; it reads MGKTKLKPVEDVNSEVVDEVEKAEEVEEQRNDREQEEEQKEEEAPKSF. Residues 9–47 are a coiled coil; it reads VEDVNSEVVDEVEKAEEVEEQRNDREQEEEQKEEEAPKS. Acidic residues predominate over residues 12-27; sequence VNSEVVDEVEKAEEVE. The Q motif motif lies at 46–74; it reads KSFEELGLDSRLIRALTKKGIEKPTLIQQ. The region spanning 77 to 259 is the Helicase ATP-binding domain; the sequence is IPYILEGKDV…KLILHNPIVL (183 aa). ATP is bound at residue 90–97; sequence AKTGSGKT. The short motif at 207–210 is the DEAD box element; it reads DEAD. The Helicase C-terminal domain occupies 293–477; sequence ALLKLEVVQK…PFPLLTENAV (185 aa). Residues 356-385 adopt a coiled-coil conformation; sequence IATDDNSQTKKQKEEAKGEANKENKKNNKR. The span at 363-381 shows a compositional bias: basic and acidic residues; it reads QTKKQKEEAKGEANKENKK. Disordered stretches follow at residues 363–388 and 568–626; these read QTKK…RSKP and AMGN…QKTV.

The protein belongs to the DEAD box helicase family. DDX56/DBP9 subfamily.

It catalyses the reaction ATP + H2O = ADP + phosphate + H(+). This is DEAD-box ATP-dependent RNA helicase 16 (RH16) from Arabidopsis thaliana (Mouse-ear cress).